The chain runs to 558 residues: Formate--tetrahydrofolate ligase (558 aa).

T67–T74 provides a ligand contact to ATP.

The protein belongs to the formate--tetrahydrofolate ligase family.

It catalyses the reaction (6S)-5,6,7,8-tetrahydrofolate + formate + ATP = (6R)-10-formyltetrahydrofolate + ADP + phosphate. It participates in one-carbon metabolism; tetrahydrofolate interconversion. In Roseobacter denitrificans (strain ATCC 33942 / OCh 114) (Erythrobacter sp. (strain OCh 114)), this protein is Formate--tetrahydrofolate ligase.